A 326-amino-acid polypeptide reads, in one-letter code: uncharacterized protein (326 aa).

28–35 (GPINSGKT) contributes to the ATP binding site.

This sequence belongs to the archaeal ATPase family.

This is an uncharacterized protein from Pyrococcus abyssi (strain GE5 / Orsay).